The chain runs to 309 residues: Homoserine kinase (309 aa).

Residue 91–101 (PIGSGLGSSAC) participates in ATP binding.

The protein belongs to the GHMP kinase family. Homoserine kinase subfamily.

It is found in the cytoplasm. It catalyses the reaction L-homoserine + ATP = O-phospho-L-homoserine + ADP + H(+). Its pathway is amino-acid biosynthesis; L-threonine biosynthesis; L-threonine from L-aspartate: step 4/5. Catalyzes the ATP-dependent phosphorylation of L-homoserine to L-homoserine phosphate. This chain is Homoserine kinase, found in Yersinia pseudotuberculosis serotype O:1b (strain IP 31758).